A 726-amino-acid chain; its full sequence is Catalase-peroxidase (726 aa).

The disordered stretch occupies residues 1–33 (MSTSDDIHNTTATGKCPFHQGGHDQSAGAGTTT). The tryptophyl-tyrosyl-methioninium (Trp-Tyr) (with M-252) cross-link spans 105-226 (WHGAGTYRSI…LGATEMGLIY (122 aa)). The active-site Proton acceptor is the histidine 106. The tryptophyl-tyrosyl-methioninium (Tyr-Met) (with W-105) cross-link spans 226–252 (YVNPEGPDHSGEPLSAAAAIRATFGNM). Histidine 267 serves as a coordination point for heme b.

The protein belongs to the peroxidase family. Peroxidase/catalase subfamily. In terms of assembly, homodimer or homotetramer. It depends on heme b as a cofactor. Post-translationally, formation of the three residue Trp-Tyr-Met cross-link is important for the catalase, but not the peroxidase activity of the enzyme.

It carries out the reaction H2O2 + AH2 = A + 2 H2O. It catalyses the reaction 2 H2O2 = O2 + 2 H2O. Functionally, bifunctional enzyme with both catalase and broad-spectrum peroxidase activity. The polypeptide is Catalase-peroxidase (Shigella flexneri).